The primary structure comprises 217 residues: tRNA (guanine-N(7)-)-methyltransferase (217 aa).

The S-adenosyl-L-methionine site is built by E44, E69, D96, and D118. Residue D118 is part of the active site. Substrate-binding positions include K122, D154, and 191–194; that span reads TEYE.

Belongs to the class I-like SAM-binding methyltransferase superfamily. TrmB family.

The catalysed reaction is guanosine(46) in tRNA + S-adenosyl-L-methionine = N(7)-methylguanosine(46) in tRNA + S-adenosyl-L-homocysteine. The protein operates within tRNA modification; N(7)-methylguanine-tRNA biosynthesis. Functionally, catalyzes the formation of N(7)-methylguanine at position 46 (m7G46) in tRNA. The polypeptide is tRNA (guanine-N(7)-)-methyltransferase (Bacillus anthracis (strain CDC 684 / NRRL 3495)).